The primary structure comprises 244 residues: Cobalt transport protein CbiM (244 aa).

A signal peptide spans 1–27 (MVEGMLKTNFRLLFLLIFLLIPTPVLA). The next 6 membrane-spanning stretches (helical) occupy residues 36 to 56 (PVKWVIFWDLVTLPFIMVGFI), 65 to 85 (GPGAKLMLAFAGAFIFVLSAL), 102 to 122 (LAAILFGPFITTVLGFIVLIF), 134 to 154 (TLGANTFSMAVAGPLVAYGVY), 168 to 188 (IFLAAMLGDLVTYIVTSVQLA), and 196 to 216 (LFLSALKFMGIFALTQIPLAI).

Belongs to the CbiM family. Forms an energy-coupling factor (ECF) transporter complex composed of an ATP-binding protein (A component, CbiO), a transmembrane protein (T component, CbiQ) and 2 possible substrate-capture proteins (S components, CbiM and CbiN) of unknown stoichimetry.

The protein localises to the cell membrane. It functions in the pathway cofactor biosynthesis; adenosylcobalamin biosynthesis. Part of the energy-coupling factor (ECF) transporter complex CbiMNOQ involved in cobalt import. The sequence is that of Cobalt transport protein CbiM from Carboxydothermus hydrogenoformans (strain ATCC BAA-161 / DSM 6008 / Z-2901).